Here is a 268-residue protein sequence, read N- to C-terminus: Nickel import ATP-binding protein NikE (268 aa).

Residues 4–252 (LNVSGLSHHY…SSDAGRVLQN (249 aa)) form the ABC transporter domain. 45-52 (GRSGCGKS) lines the ATP pocket.

It belongs to the ABC transporter superfamily. Nickel importer (TC 3.A.1.5.3) family. The complex is composed of two ATP-binding proteins (NikD and NikE), two transmembrane proteins (NikB and NikC) and a solute-binding protein (NikA).

The protein localises to the cell inner membrane. The catalysed reaction is Ni(2+)(out) + ATP + H2O = Ni(2+)(in) + ADP + phosphate + H(+). Functionally, part of the ABC transporter complex NikABCDE involved in nickel import. Responsible for energy coupling to the transport system. The polypeptide is Nickel import ATP-binding protein NikE (Shigella boydii serotype 4 (strain Sb227)).